Consider the following 114-residue polypeptide: Biofilm growth-associated repressor (114 aa).

An HTH arsR-type domain is found at D17–E111. Residues V51–E74 constitute a DNA-binding region (H-T-H motif).

In terms of biological role, represses an operon that comprises itself, XF_0764, XF_0765, XF_0766 and blh. Binds to a palindromic AT-rich sequence spanning the -10 region of the blh promoter and blocks transcription of the operon. The polypeptide is Biofilm growth-associated repressor (bigR) (Xylella fastidiosa (strain 9a5c)).